The following is a 1356-amino-acid chain: MLLIIFILPTTLAVIGDFNCTNFAINDLNTTVPRISEYVVDVSYGLGTYYILDRVYLNTTILFTGYFPKSGANFRDLSLKGTTYLSTLWYQKPFLSDFNNGIFSRVKNTKLYVNKTLYSEFSTIVIGSVFINNSYTIVVQPHNGVLEITACQYTMCEYPHTICKSKGSSRNESWHFDKSEPLCLFKKNFTYNVSTDWLYFHFYQERGTFYAYYADSGMPTTFLFSLYLGTLLSHYYVLPLTCNAISSNTDNETLQYWVTPLSKRQYLLKFDNRGVITNAVDCSSSFFSEIQCKTKSLLPNTGVYDLSGFTVKPVATVHRRIPDLPDCDIDKWLNNFNVPSPLNWERKIFSNCNFNLSTLLRLVHTDSFSCNNFDESKIYGSCFKSIVLDKFAIPNSRRSDLQLGSSGFLQSSNYKIDTTSSSCQLYYSLPAINVTINNYNPSSWNRRYGFNNFNLSSHSVVYSRYCFSVNNTFCPCAKPSFASSCKSHKPPSASCPIGTNYRSCESTTVLDHTDWCRCSCLPDPITAYDPRSCSQKKSLVGVGEHCAGFGVDEEKCGVLDGSYNVSCLCSTDAFLGWSYDTCVSNNRCNIFSNFILNGINSGTTCSNDLLQPNTEVFTDVCVDYDLYGITGQGIFKEVSAVYYNSWQNLLYDSNGNIIGFKDFVTNKTYNIFPCYAGRVSAAFHQNASSLALLYRNLKCSYVLNNISLTTQPYFDSYLGCVFNADNLTDYSVSSCALRMGSGFCVDYNSPSSSSSRRKRRSISASYRFVTFEPFNVSFVNDSIESVGGLYEIKIPTNFTIVGQEEFIQTNSPKVTIDCSLFVCSNYAACHDLLSEYGTFCDNINSILDEVNGLLDTTQLHVADTLMQGVTLSSNLNTNLHFDVDNINFKSLVGCLGPHCGSSSRSFFEDLLFDKVKLSDVGFVEAYNNCTGGSEIRDLLCVQSFNGIKVLPPILSESQISGYTTAATVAAMFPPWSAAAGIPFSLNVQYRINGLGVTMDVLNKNQKLIATAFNNALLSIQNGFSATNSALAKIQSVVNSNAQALNSLLQQLFNKFGAISSSLQEILSRLDALEAQVQIDRLINGRLTALNAYVSQQLSDISLVKFGAALAMEKVNECVKSQSPRINFCGNGNHILSLVQNAPYGLLFMHFSYKPISFKTVLVSPGLCISGDVGIAPKQGYFIKHNDHWMFTGSSYYYPEPISDKNVVFMNTCSVNFTKAPLVYLNHSVPKLSDFESELSHWFKNQTSIAPNLTLNLHTINATFLDLYYEMNLIQESIKSLNNSYINLKDIGTYEMYVKWPWYVWLLISFSFIIFLVLLFFICCCTGCGSACFSKCHNCCDEYGGHHDFVIKTSHDD.

A signal peptide spans 1 to 12 (MLLIIFILPTTL). The Extracellular portion of the chain corresponds to 13 to 1300 (AVIGDFNCTN…GTYEMYVKWP (1288 aa)). A BetaCoV S1-NTD domain is found at 14 to 294 (VIGDFNCTNF…SFFSEIQCKT (281 aa)). N-linked (GlcNAc...) asparagine; by host glycans are attached at residues Asn19, Asn29, Asn58, Asn114, Asn132, Asn171, Asn188, Asn192, and Asn251. Intrachain disulfides connect Cys20/Cys156, Cys151/Cys183, and Cys163/Cys242. Cystine bridges form between Cys282–Cys292 and Cys327–Cys352. Residues 325–607 (PDCDIDKWLN…GINSGTTCSN (283 aa)) enclose the BetaCoV S1-CTD domain. Asn355 is a glycosylation site (N-linked (GlcNAc...) asparagine; by host). Cystine bridges form between Cys370-Cys423 and Cys382-Cys605. Residues Asn433, Asn454, Asn470, Asn564, Asn666, Asn686, Asn705, Asn726, Asn775, Asn780, and Asn797 are each glycosylated (N-linked (GlcNAc...) asparagine; by host). Fusion peptide regions lie at residues 905-926 (SFFE…VEAY) and 924-944 (EAYN…VQSF). Asn928 is a glycosylation site (N-linked (GlcNAc...) asparagine; by host). Cys929 and Cys940 form a disulfide bridge. Positions 1005-1055 (QKLIATAFNNALLSIQNGFSATNSALAKIQSVVNSNAQALNSLLQQLFNKF) are heptad repeat 1. Positions 1034–1078 (QSVVNSNAQALNSLLQQLFNKFGAISSSLQEILSRLDALEAQVQI) form a coiled coil. N-linked (GlcNAc...) asparagine; by host glycans are attached at residues Asn1215, Asn1225, Asn1244, Asn1251, Asn1260, and Asn1281. The heptad repeat 2 stretch occupies residues 1249–1289 (APNLTLNLHTINATFLDLYYEMNLIQESIKSLNNSYINLKD). A coiled-coil region spans residues 1262-1290 (TFLDLYYEMNLIQESIKSLNNSYINLKDI). The helical transmembrane segment at 1301-1321 (WYVWLLISFSFIIFLVLLFFI) threads the bilayer. Topologically, residues 1322-1356 (CCCTGCGSACFSKCHNCCDEYGGHHDFVIKTSHDD) are cytoplasmic. The short motif at 1352 to 1356 (TSHDD) is the KxHxx element.

The protein belongs to the betacoronaviruses spike protein family. In terms of assembly, homotrimer; each monomer consists of a S1 and a S2 subunit. The resulting peplomers protrude from the virus surface as spikes. In terms of processing, specific enzymatic cleavages in vivo yield mature proteins. The precursor is processed into S1 and S2 by host cell furin or another cellular protease to yield the mature S1 and S2 proteins. Additionally, a second cleavage leads to the release of a fusion peptide after viral attachment to host cell receptor. The cytoplasmic Cys-rich domain is palmitoylated. Spike glycoprotein is digested within host endosomes.

Its subcellular location is the virion membrane. It is found in the host endoplasmic reticulum-Golgi intermediate compartment membrane. The protein localises to the host cell membrane. In terms of biological role, attaches the virion to the cell membrane by interacting with host receptor, initiating the infection. Functionally, mediates fusion of the virion and cellular membranes by acting as a class I viral fusion protein. Under the current model, the protein has at least three conformational states: pre-fusion native state, pre-hairpin intermediate state, and post-fusion hairpin state. During viral and target cell membrane fusion, the coiled coil regions (heptad repeats) assume a trimer-of-hairpins structure, positioning the fusion peptide in close proximity to the C-terminal region of the ectodomain. The formation of this structure appears to drive apposition and subsequent fusion of viral and target cell membranes. Its function is as follows. Acts as a viral fusion peptide which is unmasked following S2 cleavage occurring upon virus endocytosis. This chain is Spike glycoprotein, found in Human coronavirus HKU1 (isolate N1) (HCoV-HKU1).